Consider the following 451-residue polypeptide: Bacteriochlorophyllide d C-8(2)-methyltransferase (451 aa).

The region spanning 1–118 (MDDDSNQKPL…DDVANNRLKE (118 aa)) is the B12-binding domain. The region spanning 148-377 (VDGTKSIPIY…ALHLVIKSDR (230 aa)) is the Radical SAM core domain. 3 residues coordinate [4Fe-4S] cluster: Cys-162, Cys-166, and Cys-169.

The protein belongs to the radical SAM superfamily. The cofactor is [4Fe-4S] cluster.

Its subcellular location is the cytoplasm. The enzyme catalyses 8,12-diethyl-3-vinylbacteriochlorophyllide d + S-adenosyl-L-methionine = 12-ethyl-8-propyl-3-vinylbacteriochlorophyllide d + S-adenosyl-L-homocysteine + H(+). The catalysed reaction is 12-ethyl-8-propyl-3-vinylbacteriochlorophyllide d + S-adenosyl-L-methionine = 12-ethyl-8-isobutyl-3-vinylbacteriochlorophyllide d + S-adenosyl-L-homocysteine + H(+). It participates in porphyrin-containing compound metabolism; bacteriochlorophyll biosynthesis (light-independent). Functionally, involved in the biosynthesis of the major light-harvesting pigment bacteriochlorophyll c (BChlc), which confers a significant competitive advantage to green sulfur bacteria living at limiting red and near-infrared light intensities. BchQ is a methyltransferase that adds two consecutive methyl groups to the ethyl carbon at the C-8(2) position of 8,12-diethyl-3-vinylbacteriochlorophyllide d to yield 12-ethyl-8-isobutyl-3-vinylbacteriochlorophyllide d. In Chlorobaculum tepidum (strain ATCC 49652 / DSM 12025 / NBRC 103806 / TLS) (Chlorobium tepidum), this protein is Bacteriochlorophyllide d C-8(2)-methyltransferase.